Consider the following 453-residue polypeptide: UDP-N-acetylmuramate--L-alanine ligase (453 aa).

G112 to T118 is an ATP binding site.

This sequence belongs to the MurCDEF family.

Its subcellular location is the cytoplasm. The catalysed reaction is UDP-N-acetyl-alpha-D-muramate + L-alanine + ATP = UDP-N-acetyl-alpha-D-muramoyl-L-alanine + ADP + phosphate + H(+). It participates in cell wall biogenesis; peptidoglycan biosynthesis. Functionally, cell wall formation. The protein is UDP-N-acetylmuramate--L-alanine ligase of Bdellovibrio bacteriovorus (strain ATCC 15356 / DSM 50701 / NCIMB 9529 / HD100).